Reading from the N-terminus, the 1275-residue chain is Serine/threonine-protein kinase ULK4 (1275 aa).

In terms of domain architecture, Protein kinase spans 4 to 280 (FILYEEIGRG…WTRLLQHSFW (277 aa)). Disordered regions lie at residues 299–350 (SRNT…KSTL) and 364–392 (RPTPRTSTAVEVSPGEDMTHCSPQKTSPL). Over residues 336-348 (FRLENPTEFRPKS) the composition is skewed to basic and acidic residues. Positions 364 to 373 (RPTPRTSTAV) are enriched in polar residues. 5 HEAT repeats span residues 842–880 (LKLCLPLMPVVLHLVTSQVFRPQVVTEEFLFSYGTILSH), 926–964 (STVVDYILPPLVSLVQSQNVEWRLFSLRLLSETTSLLVN), 1025–1063 (LVEESKLIPLIFEVTLEHQESILGNTMQSVIALLSNLVA), 1151–1189 (NRPLTDLISLLIPLLPNEDPEIFDVSSKCLSILVQLYGG), and 1213–1253 (PKEQ…LAPG).

This sequence belongs to the protein kinase superfamily. Ser/Thr protein kinase family. APG1/unc-51/ULK1 subfamily. As to expression, expressed in the brain, mainly in postmitotic neurons, including GABAergic neurons, but not in astrocytes (at protein level).

It catalyses the reaction L-seryl-[protein] + ATP = O-phospho-L-seryl-[protein] + ADP + H(+). The enzyme catalyses L-threonyl-[protein] + ATP = O-phospho-L-threonyl-[protein] + ADP + H(+). Functionally, may be involved in the remodeling of cytoskeletal components, such as alpha-tubulin, and in this way regulates neurite branching and elongation, as well as cell motility. The sequence is that of Serine/threonine-protein kinase ULK4 (ULK4) from Homo sapiens (Human).